Here is a 108-residue protein sequence, read N- to C-terminus: MMKGQLAGLMKQAQQMQENMKKMQEQLALIEVEGQSGAGLVKVTMTCRNEVRRVAIDPSLLADDKDMLEDLVAAAFNDAVRKAEATSQEKMSGMTSGLPLPPGFKLPF.

The tract at residues 84–108 is disordered; sequence EATSQEKMSGMTSGLPLPPGFKLPF. The span at 85–95 shows a compositional bias: polar residues; that stretch reads ATSQEKMSGMT. A compositionally biased stretch (pro residues) spans 99 to 108; it reads PLPPGFKLPF.

Belongs to the YbaB/EbfC family. As to quaternary structure, homodimer.

The protein resides in the cytoplasm. It localises to the nucleoid. Its function is as follows. Binds to DNA and alters its conformation. May be involved in regulation of gene expression, nucleoid organization and DNA protection. This is Nucleoid-associated protein BMASAVP1_A1850 from Burkholderia mallei (strain SAVP1).